Reading from the N-terminus, the 950-residue chain is Protein lin-54 homolog (950 aa).

5 disordered regions span residues 1 to 63, 366 to 387, 500 to 523, 533 to 552, and 638 to 702; these read MDTS…DSLN, NASA…TSSG, ASKP…PRKH, KQSA…GPEA, and VENK…LPPG. Over residues 10–26 the composition is skewed to acidic residues; the sequence is SLDDTEPLPELSFEDFL. A compositionally biased stretch (basic and acidic residues) spans 29-39; the sequence is TSEKSSQHMEI. Acidic residues predominate over residues 40-55; that stretch reads EALDSEEDNIGGEDLA. Low complexity-rich tracts occupy residues 366-386, 500-516, 535-548, and 661-682; these read NASA…STSS, ASKP…PSAS, SASV…SSDA, and QQQS…QQQL. The CRC domain occupies 737–849; the sequence is RRKHCNCSKS…KCVGCRNMED (113 aa).

The protein belongs to the lin-54 family. As to quaternary structure, component of the DREAM complex at least composed of Myb, Caf1-55, mip40, mip120, mip130, E2f2, Dp, Rbf, Rbf2, lin-52, HDAC1/Rpd3 and l(3)mbt.

The protein resides in the nucleus. Component of the DREAM complex, a multiprotein complex that can both act as a transcription activator or repressor depending on the context. In follicle cells, the complex plays a central role in the site-specific DNA replication at the chorion loci. During development, the complex represses transcription of developmentally controlled E2F target genes. This chain is Protein lin-54 homolog (mip120), found in Drosophila melanogaster (Fruit fly).